We begin with the raw amino-acid sequence, 845 residues long: Complement component C7 (845 aa).

The N-terminal stretch at 1–22 (MQVTSLLILVCFIAAFQVFSRA) is a signal peptide. The region spanning 27–80 (NCKWDSYGPWSECNGCTKTQTRRRSVAVYGQYGGYPCEGSAFETQSCKPERGCP) is the TSP type-1 1 domain. 6 disulfide bridges follow: Cys28/Cys63, Cys39/Cys73, Cys42/Cys79, Cys85/Cys96, Cys91/Cys109, and Cys103/Cys119. In terms of domain architecture, LDL-receptor class A spans 84–120 (GCGDRFRCFSGQCISKSLVCNGDPDCEEDGADEDKCE). The region spanning 122-456 (VANPSCNIDK…EYFDEFDPCH (335 aa)) is the MACPF domain. Asn124 is a glycosylation site (N-linked (GlcNAc...) asparagine). A disulfide bond links Cys127 and Cys164. Asn201 carries an N-linked (GlcNAc...) asparagine glycan. Intrachain disulfides connect Cys336/Cys353, Cys433/Cys560, Cys455/Cys505, Cys457/Cys473, Cys460/Cys475, Cys477/Cys486, Cys512/Cys545, Cys523/Cys535, Cys571/Cys613, Cys599/Cys626, Cys631/Cys673, Cys659/Cys688, Cys703/Cys714, Cys716/Cys751, Cys722/Cys744, Cys729/Cys764, Cys774/Cys783, Cys777/Cys790, Cys792/Cys826, Cys798/Cys819, and Cys806/Cys839. In terms of domain architecture, EGF-like spans 457-487 (CRPCQNGGLAIVVETQCQCLCKPYTFGSACE). In terms of domain architecture, TSP type-1 2 spans 500-549 (DGGWNCWSSWSPCVQGKRTRSRECNNPPPRDDGKSCLGETTESKQCEDQD). CCP regions lie at residues 545-615 (CEDQ…RCGE) and 616-693 (DLQW…QKAT). Sushi domains lie at 569 to 628 (EFCL…HCQK) and 629 to 690 (LACV…KCVQ). 2 factor I module (FIM) regions span residues 695 to 771 (TPPP…SPAE) and 772 to 844 (KVCG…EEAA). Asn755 carries an N-linked (GlcNAc...) asparagine glycan.

It belongs to the complement C6/C7/C8/C9 family. Monomer or dimer; as a C5b-7 complex it can also form multimeric rosettes. Component of the membrane attack complex (MAC), composed of complement C5b, C6, C7, C8A, C8B, C8G and multiple copies of the pore-forming subunit C9. Post-translationally, C-, N- and O-glycosylated. O-glycosylated with core 1 or possibly core 8 glycans.

It is found in the secreted. It localises to the target cell membrane. Its activity is regulated as follows. Membrane attack complex (MAC) assembly is inhibited by CD59, thereby protecting self-cells from damage during complement activation. MAC assembly is also inhibited by clusterin (CLU) chaperones that inhibit polymerization of C9. Its function is as follows. Component of the membrane attack complex (MAC), a multiprotein complex activated by the complement cascade, which inserts into a target cell membrane and forms a pore, leading to target cell membrane rupture and cell lysis. The MAC is initiated by proteolytic cleavage of C5 into complement C5b in response to the classical, alternative, lectin and GZMK complement pathways. The complement pathways consist in a cascade of proteins that leads to phagocytosis and breakdown of pathogens and signaling that strengthens the adaptive immune system. C7 serves as a membrane anchor. During MAC assembly, associates with C5b and C6 to form the C5b-7 complex, a key lipophilic precursor of the MAC complex, which associates with the outer leaflet and reduces the energy for membrane bending. The protein is Complement component C7 of Mus musculus (Mouse).